A 245-amino-acid chain; its full sequence is rRNA adenine N-6-methyltransferase (245 aa).

Asn10, Leu12, Gly37, Glu58, Asp83, and Asn100 together coordinate S-adenosyl-L-methionine.

This sequence belongs to the class I-like SAM-binding methyltransferase superfamily. rRNA adenine N(6)-methyltransferase family.

It catalyses the reaction adenosine(2085) in 23S rRNA + 2 S-adenosyl-L-methionine = N(6)-dimethyladenosine(2085) in 23S rRNA + 2 S-adenosyl-L-homocysteine + 2 H(+). Its function is as follows. This protein produces a dimethylation of the adenine residue at position 2085 in 23S rRNA, resulting in reduced affinity between ribosomes and macrolide-lincosamide-streptogramin B antibiotics. The protein is rRNA adenine N-6-methyltransferase (ermBC) of Escherichia coli.